The following is a 765-amino-acid chain: Periplasmic beta-glucosidase (765 aa).

Residues 1–20 (MKWLCSVGIAVSLALQPALA) form the signal peptide. Residue Asp287 is part of the active site.

Belongs to the glycosyl hydrolase 3 family.

The protein resides in the periplasm. The enzyme catalyses Hydrolysis of terminal, non-reducing beta-D-glucosyl residues with release of beta-D-glucose.. This chain is Periplasmic beta-glucosidase (bglX), found in Escherichia coli (strain K12).